The primary structure comprises 1375 residues: DNA-directed RNA polymerase subunit beta (1375 aa).

Belongs to the RNA polymerase beta chain family. The RNAP catalytic core consists of 2 alpha, 1 beta, 1 beta' and 1 omega subunit. When a sigma factor is associated with the core the holoenzyme is formed, which can initiate transcription.

It catalyses the reaction RNA(n) + a ribonucleoside 5'-triphosphate = RNA(n+1) + diphosphate. Functionally, DNA-dependent RNA polymerase catalyzes the transcription of DNA into RNA using the four ribonucleoside triphosphates as substrates. This is DNA-directed RNA polymerase subunit beta from Malacoplasma penetrans (strain HF-2) (Mycoplasma penetrans).